A 196-amino-acid polypeptide reads, in one-letter code: Imidazoleglycerol-phosphate dehydratase (196 aa).

It belongs to the imidazoleglycerol-phosphate dehydratase family.

The protein resides in the cytoplasm. The catalysed reaction is D-erythro-1-(imidazol-4-yl)glycerol 3-phosphate = 3-(imidazol-4-yl)-2-oxopropyl phosphate + H2O. It functions in the pathway amino-acid biosynthesis; L-histidine biosynthesis; L-histidine from 5-phospho-alpha-D-ribose 1-diphosphate: step 6/9. This is Imidazoleglycerol-phosphate dehydratase from Oleidesulfovibrio alaskensis (strain ATCC BAA-1058 / DSM 17464 / G20) (Desulfovibrio alaskensis).